We begin with the raw amino-acid sequence, 276 residues long: NH(3)-dependent NAD(+) synthetase (276 aa).

An ATP-binding site is contributed by 46–53 (GISGGQDS). Residue D52 coordinates Mg(2+). Residue R141 participates in deamido-NAD(+) binding. T161 provides a ligand contact to ATP. Position 166 (E166) interacts with Mg(2+). Residues K174 and D181 each coordinate deamido-NAD(+). K190 and T212 together coordinate ATP. A deamido-NAD(+)-binding site is contributed by 261–262 (HK).

Belongs to the NAD synthetase family. Homodimer.

The enzyme catalyses deamido-NAD(+) + NH4(+) + ATP = AMP + diphosphate + NAD(+) + H(+). The protein operates within cofactor biosynthesis; NAD(+) biosynthesis; NAD(+) from deamido-NAD(+) (ammonia route): step 1/1. Its function is as follows. Catalyzes the ATP-dependent amidation of deamido-NAD to form NAD. Uses ammonia as a nitrogen source. The sequence is that of NH(3)-dependent NAD(+) synthetase from Limosilactobacillus fermentum (strain NBRC 3956 / LMG 18251) (Lactobacillus fermentum).